Here is a 159-residue protein sequence, read N- to C-terminus: Ribonuclease H (159 aa).

An RNase H type-1 domain is found at 4–145 (THKQVNIYTD…CDKLARDAAE (142 aa)). Mg(2+)-binding residues include Asp-13, Glu-51, Asp-73, and Asp-137.

Belongs to the RNase H family. As to quaternary structure, monomer. The cofactor is Mg(2+).

Its subcellular location is the cytoplasm. It catalyses the reaction Endonucleolytic cleavage to 5'-phosphomonoester.. Endonuclease that specifically degrades the RNA of RNA-DNA hybrids. This Shewanella denitrificans (strain OS217 / ATCC BAA-1090 / DSM 15013) protein is Ribonuclease H.